Consider the following 219-residue polypeptide: Melanoma-associated antigen H1 (219 aa).

Residues methionine 1 to alanine 13 show a composition bias toward basic residues. Residues methionine 1 to phenylalanine 84 are disordered. The region spanning methionine 1–aspartate 198 is the MAGE domain. Over residues proline 44–threonine 57 the composition is skewed to acidic residues. Residues proline 58–alanine 74 show a composition bias toward low complexity. Residue tyrosine 195 is modified to Phosphotyrosine.

This Homo sapiens (Human) protein is Melanoma-associated antigen H1 (MAGEH1).